The sequence spans 503 residues: Trehalose-6-phosphate synthase (503 aa).

A D-glucose 6-phosphate-binding site is contributed by R22. G42–G43 is a binding site for UDP-alpha-D-glucose. The D-glucose 6-phosphate site is built by Y94 and D148. Positions 290 and 295 each coordinate UDP-alpha-D-glucose. R328 is a D-glucose 6-phosphate binding site. UDP-alpha-D-glucose is bound at residue L393 to E397. The segment at G481–F503 is disordered.

It belongs to the glycosyltransferase 20 family. As to quaternary structure, homotetramer.

The enzyme catalyses ADP-alpha-D-glucose + D-glucose 6-phosphate = alpha,alpha-trehalose 6-phosphate + ADP + H(+). The catalysed reaction is CDP-alpha-D-glucose + D-glucose 6-phosphate = alpha,alpha-trehalose 6-phosphate + CDP + H(+). It catalyses the reaction GDP-alpha-D-glucose + D-glucose 6-phosphate = alpha,alpha-trehalose 6-phosphate + GDP + H(+). It carries out the reaction TDP-alpha-D-glucose + D-glucose 6-phosphate = 5-methyl-UDP + alpha,alpha-trehalose 6-phosphate + H(+). The enzyme catalyses D-glucose 6-phosphate + UDP-alpha-D-glucose = alpha,alpha-trehalose 6-phosphate + UDP + H(+). It participates in glycan biosynthesis; trehalose biosynthesis. With respect to regulation, stimulated by the polynucleotide FII (physiological activator), and by chondroitin sulfate (CS) and heparin. Activation by the polyanion is inhibited by high salt concentration as well as by high concentrations of mononucleoside phosphates. Involved in the production of glycogen and alpha-glucan via the TreS-Pep2 branch involved in the biosynthesis of maltose-1-phosphate (M1P), and probably in the osmoprotection via the biosynthesis of trehalose. Catalyzes the transfer of glucose from UDP-glucose (UDP-Glc) to glucose-6-phosphate (Glc-6-P) to form trehalose-6-phosphate. ADP-Glc, CDP-Glc, GDP-Glc and TDP-Glc are also glucosyl donors, however, when the pyrimidine sugar nucleotides (CDP-Glc, TDP-Glc and UDP-Glc) are used as substrates, there is an absolute requirement for a high molecular weight polyanion for activity. In Mycolicibacterium smegmatis (strain ATCC 700084 / mc(2)155) (Mycobacterium smegmatis), this protein is Trehalose-6-phosphate synthase.